Reading from the N-terminus, the 274-residue chain is 2-dehydro-3-deoxyphosphooctonate aldolase (274 aa).

Belongs to the KdsA family.

It localises to the cytoplasm. The enzyme catalyses D-arabinose 5-phosphate + phosphoenolpyruvate + H2O = 3-deoxy-alpha-D-manno-2-octulosonate-8-phosphate + phosphate. It functions in the pathway carbohydrate biosynthesis; 3-deoxy-D-manno-octulosonate biosynthesis; 3-deoxy-D-manno-octulosonate from D-ribulose 5-phosphate: step 2/3. The protein operates within bacterial outer membrane biogenesis; lipopolysaccharide biosynthesis. In Rickettsia rickettsii (strain Iowa), this protein is 2-dehydro-3-deoxyphosphooctonate aldolase.